The sequence spans 218 residues: Probable transaldolase (218 aa).

Lysine 87 functions as the Schiff-base intermediate with substrate in the catalytic mechanism.

It belongs to the transaldolase family. Type 3B subfamily.

It is found in the cytoplasm. The catalysed reaction is D-sedoheptulose 7-phosphate + D-glyceraldehyde 3-phosphate = D-erythrose 4-phosphate + beta-D-fructose 6-phosphate. It participates in carbohydrate degradation; pentose phosphate pathway; D-glyceraldehyde 3-phosphate and beta-D-fructose 6-phosphate from D-ribose 5-phosphate and D-xylulose 5-phosphate (non-oxidative stage): step 2/3. Its function is as follows. Transaldolase is important for the balance of metabolites in the pentose-phosphate pathway. This chain is Probable transaldolase, found in Cytophaga hutchinsonii (strain ATCC 33406 / DSM 1761 / CIP 103989 / NBRC 15051 / NCIMB 9469 / D465).